Consider the following 345-residue polypeptide: L-rhamnose-proton symporter (345 aa).

10 consecutive transmembrane segments (helical) span residues 4–24 (AITM…CFYA), 38–58 (WSVG…ALLL), 68–88 (FSAA…IGNI), 101–121 (MGIG…TPLL), 131–151 (TAGG…VAIV), 175–195 (LVLA…MDAA), 214–234 (LPSY…FCFI), 259–279 (VLLS…YAWG), 290–310 (ISWM…GLLL), and 323–343 (VLSL…LGMA).

This sequence belongs to the L-rhamnose transporter (TC 2.A.7.6) family.

The protein resides in the cell inner membrane. It carries out the reaction L-rhamnopyranose(in) + H(+)(in) = L-rhamnopyranose(out) + H(+)(out). In terms of biological role, uptake of L-rhamnose across the cytoplasmic membrane with the concomitant transport of protons into the cell (symport system). This is L-rhamnose-proton symporter from Cronobacter sakazakii (strain ATCC BAA-894) (Enterobacter sakazakii).